Consider the following 156-residue polypeptide: Small ribosomal subunit protein uS7 (156 aa).

The protein belongs to the universal ribosomal protein uS7 family. In terms of assembly, part of the 30S ribosomal subunit. Contacts proteins S9 and S11.

Its function is as follows. One of the primary rRNA binding proteins, it binds directly to 16S rRNA where it nucleates assembly of the head domain of the 30S subunit. Is located at the subunit interface close to the decoding center, probably blocks exit of the E-site tRNA. The chain is Small ribosomal subunit protein uS7 from Mycolicibacterium gilvum (strain PYR-GCK) (Mycobacterium gilvum (strain PYR-GCK)).